A 298-amino-acid chain; its full sequence is Acetylglutamate kinase (298 aa).

Substrate is bound by residues 69-70, R91, and N196; that span reads GG.

It belongs to the acetylglutamate kinase family. ArgB subfamily.

It is found in the cytoplasm. The enzyme catalyses N-acetyl-L-glutamate + ATP = N-acetyl-L-glutamyl 5-phosphate + ADP. The protein operates within amino-acid biosynthesis; L-arginine biosynthesis; N(2)-acetyl-L-ornithine from L-glutamate: step 2/4. Its function is as follows. Catalyzes the ATP-dependent phosphorylation of N-acetyl-L-glutamate. This Rhodopseudomonas palustris (strain BisB18) protein is Acetylglutamate kinase.